Consider the following 2282-residue polypeptide: MELPPPGNRRVSINNPQETSGRVPTTSAGFPTQSSKISLKRSTYAYRPSMMSNRSSGGQSLLPSSILQKTSLNPPGSLQSKPSNLSSVHYADEEGKPLTDKNKDKDKGRGKGKGTGTRLLTMLRKTLQGSQSDEMAIANQTPNLIPFGDVVGCLAIHIKSCRQFSQRFLGQQRFNLFMRVSINNIVKCTKIRHLKAVNNEKNLVLRFGEMKYFSVQVPRRQDDERNFIYLELMHDGGDPESPPIPLGGAESHLYEVIQKGCFTEVMHLMHKNSSICRVEVEFMFSYGNFGYGFSHQLKPLQKAIEPSMFMNIAPPPERTDPVTNVITPQRVEYPAFLSPEFNVSIGVPEASHATVVQLEKLREKPRERLERMKEEYKNMSTWIEKADYLRNLINPKMTKRDNKGSSIPSESNSSALEELERTTYDIHHRKYEAISNEYGDKEGRVIPVLKVLDQNYSEVFLPKSSDSTPLEDVLLPPIHSLQIVEENEMPHLPKTSEPEDRPHEERKSIVFSSDEELMPKHPSILKISSSQQENRRKMEKSPHFSDVLIIPDKPFEDLNTNKKGRPPIELRKSWERHPTDVACSLRKVAFAQKDYTIPVCKAETTEFKPKHQFQKLSKSGLDPFLRNINSKMSFRKKKDHDDGYRNLSTSSAEILEHEDQDPPYPGHSGSAGSDATWAENPSPVTVQMVNRDSLPPDLITATIVISDRKNKLSLDSVFNSANSLNTKSIFASDNPVVSLTKLSDSDNKLITDSSFNTTKPSNRRLSKDSNFNTTKPSDRKLSSDPSSNTTKPSDTKLFSDPSSNKLSQGPSSNASQLSGSNRLSHNPSINGNKSSYTSDLNKVSRDPSIVSTISSDPNKLSRDPSFVLAKSSDPNKLSHYPSIISAKSSDPNKLSHDPSFVSARSSDPNKLSHDPSIISARSSDPIKLSRDPSFVSARSSDPNKLSHDPSIISARSSDPNKLSRDPSINSTKLSDPSKLSRDPSIFSTKSSDPNKLYRVPSIISGMSSNPKLSRDPSIISGMSSDPKLSRDPSIISAKSSDPNKLSHDPSIISGMSSNPNKLSHDPSIISMKLSDMSKLSRESSINASKSSDTNQLSYDPNIISAKSLDSNNSSASSSPTVNSDTTTNAAEPSGTKNMLDPVVSTIDSSDKQSKLEWLPNVQGASSVTENINTHRSSNSVNFTSDIDILKQSIVLKSILSKNLQDLSDELFSKSELYTNDEGYSPPPSVHSRPSDSTDDRVLGKVQDLNSWRSSKDLLNSQVLLSPVVKNSPQDLLPEGEPGKSSDIEDYVSEKLLEAAGRNFPMNRKSSFKKKHLVSEESSSEHVLSGSIYEYVIKQIFTAPIFSQLGIGIKSSSEARMDSQNQLLTPWERSVTSHIINYEEKDSDVNLSQSKSIISQIIQSFPVNTLLESGVIKVIELDKEHQNSLLDSQTTSSTEQYSDSRSQIKLLSRQNTSSINPLDSSVSGAEYTEDCQSISTQESKYPVRDTKSDSPNDTEEMELDSNLESSSSSLDKVKDTDTAKLKNILKNIFSIFFKYNQSERRQQPEKDSESLIKHSSSSGSEHLEKTQENFNKADKKVDRKPILNPKLRMFLEKLSETEVKNLKSELSKHIQHYLVERLTESGHITKEDLPTIYHKLYLMNEKVELKEQTPFQEKYSETVKEIMSFVNNFNHHFIDKHLETKLRGFLSEILQNYFLKNLSVSNLFNETDAMALHASMSPVRSKSELGQDIADGNFGSSLKINMQYPVTKSLQHYLQDLSENELLSLKTDLSKYLQVLFIEKLYKSGLVSERQLKGISQEIISLHSPSIPLKHIKTNLPFRNESYFMREDSEEQMKYLKNGQNAALHVLLKDKCGETELSRKKERESSFSQILKENLPAIWEQKNIYTREEETLNLIQMQSFLNKNNQANPLTRSPERPSDISLKKQKKDHGFMQFTQVEGSVYKTEIQDPYSWDSRSKTIQSKPCLEKTLKMKLLDKRENNNFYKLTAQEKLDTEFSSYLKLPNCKIPKEKEPISRLSFPTWKTNTFIHVKPEIGEQSKLDHYYQRLKGNNNNNKKHLVTFAQFKNEMETLYRNPYEACNEKRAKISESQSFKYKEKEKSSRPFFFPEVLKRENTKSKRKERDHATKPKKSFHKIVRLLPATLPTTRPHLRKSAPRNLLHWTARRTIHDCLDRFDDLHAPTVKCPKKSKSGARLLGKSPEDSHNQAKHCARPYTAPEPNKRRESAAWKFASPRMVSAGLLHLYVTPAYGIRKVRSKRKLKEDIEKRPLISEIIQMLDNAE.

The interval 1–118 (MELPPPGNRR…RGKGKGTGTR (118 aa)) is disordered. Polar residues-rich tracts occupy residues 11 to 41 (VSINNPQETSGRVPTTSAGFPTQSSKISLKR) and 50 to 87 (MMSNRSSGGQSLLPSSILQKTSLNPPGSLQSKPSNLSS). Over residues 90–109 (YADEEGKPLTDKNKDKDKGR) the composition is skewed to basic and acidic residues. The region spanning 131-266 (QSDEMAIANQ…IQKGCFTEVM (136 aa)) is the C2 domain. Disordered stretches follow at residues 397 to 416 (MTKRDNKGSSIPSESNSSAL), 656 to 679 (EHEDQDPPYPGHSGSAGSDATWAE), 747 to 1066 (NKLI…SHDP), 1104 to 1153 (SAKS…DKQS), 1217 to 1240 (YTNDEGYSPPPSVHSRPSDSTDDR), 1426 to 1445 (NSLLDSQTTSSTEQYSDSRS), 1452 to 1515 (RQNT…SLDK), 1542 to 1569 (ERRQQPEKDSESLIKHSSSSGSEHLEKT), 1908 to 1928 (NQANPLTRSPERPSDISLKKQ), and 2187 to 2222 (PKKSKSGARLLGKSPEDSHNQAKHCARPYTAPEPNK). 5 stretches are compositionally biased toward polar residues: residues 750-760 (ITDSSFNTTKP), 783-792 (SDPSSNTTKP), 800-841 (DPSS…SDLN), 849-858 (IVSTISSDPN), and 953-974 (SARSSDPNKLSRDPSINSTKLS). Residues 1104 to 1123 (SAKSLDSNNSSASSSPTVNS) show a composition bias toward low complexity. The segment covering 1124 to 1136 (DTTTNAAEPSGTK) has biased composition (polar residues). Composition is skewed to polar residues over residues 1452–1466 (RQNTSSINPLDSSVS) and 1473–1482 (DCQSISTQES). The segment covering 1484 to 1493 (YPVRDTKSDS) has biased composition (basic and acidic residues). Residues 1495-1504 (NDTEEMELDS) are compositionally biased toward acidic residues. 2 stretches are compositionally biased toward basic and acidic residues: residues 1542–1555 (ERRQQPEKDSESLI) and 1916–1925 (SPERPSDISL).

Component of the CatSper complex or CatSpermasome composed of the core pore-forming members CATSPER1, CATSPER2, CATSPER3 and CATSPER4 as well as auxiliary members CATSPERB, CATSPERG, CATSPERD, CATSPERE, CATSPERZ, C2CD6/CATSPERT, SLCO6C1, TMEM249, TMEM262 and EFCAB9. HSPA1 may be an additional auxiliary complex member. The core complex members CATSPER1, CATSPER2, CATSPER3 and CATSPER4 form a heterotetrameric channel. The auxiliary CATSPERB, CATSPERG, CATSPERD and CATSPERE subunits form a pavilion-like structure over the pore which stabilizes the complex through interactions with CATSPER4, CATSPER3, CATSPER1 and CATSPER2 respectively. SLCO6C1 interacts with CATSPERE and TMEM262/CATSPERH interacts with CATSPERB, further stabilizing the complex. C2CD6/CATSPERT interacts at least with CATSPERD and is required for targeting the CatSper complex in the flagellar membrane. Expressed in cauda sperm (at protein level).

The protein resides in the cell projection. Its subcellular location is the cilium. It is found in the flagellum membrane. In terms of biological role, auxiliary component of the CatSper complex, a complex involved in sperm cell hyperactivation. Sperm cell hyperactivation is needed for sperm motility which is essential late in the preparation of sperm for fertilization. Required for CatSper complex targeting and trafficking into the quadrilinear nanodomains. Targets the preassembled CatSper complexes to elongating flagella, where it links the channel-carrying vesicles and motor proteins. In Mus musculus (Mouse), this protein is Cation channel sperm-associated targeting subunit tau.